The following is a 317-amino-acid chain: MAVQGSQRRLLGSLNSTPTAIPQLGLAANQTGARCLEVSISDGLFLSLGLVSLVENALVVATIAKNRNLHSPMYCFICCLALSDLLVSGSNVLETAVILLLEAGALVARAAVLQQLDNVIDVITCSSMLSSLCFLGAIAVDRYISIFYALRYHSIVTLPRARRAVAAIWVASVVFSTLFIAYYDHVAVLLCLVVFFLAMLVLMAVLYVHMLARACQHAQGIARLHKRQRPVHQGFGLKGAVTLTILLGIFFLCWGPFFLHLTLIVLCPEHPTCGCIFKNFNLFLALIICNAIIDPLIYAFHSQELRRTLKEVLTCSW.

At 1-37 (MAVQGSQRRLLGSLNSTPTAIPQLGLAANQTGARCLE) the chain is on the extracellular side. N-linked (GlcNAc...) asparagine glycosylation is present at asparagine 29. A helical membrane pass occupies residues 38–63 (VSISDGLFLSLGLVSLVENALVVATI). Topologically, residues 64-72 (AKNRNLHSP) are cytoplasmic. The chain crosses the membrane as a helical span at residues 73 to 93 (MYCFICCLALSDLLVSGSNVL). Residues 94-118 (ETAVILLLEAGALVARAAVLQQLDN) are Extracellular-facing. The helical transmembrane segment at 119–140 (VIDVITCSSMLSSLCFLGAIAV) threads the bilayer. Residues 141 to 163 (DRYISIFYALRYHSIVTLPRARR) lie on the Cytoplasmic side of the membrane. Residues 164–183 (AVAAIWVASVVFSTLFIAYY) form a helical membrane-spanning segment. Residues 184–191 (DHVAVLLC) lie on the Extracellular side of the membrane. The helical transmembrane segment at 192-211 (LVVFFLAMLVLMAVLYVHML) threads the bilayer. The Cytoplasmic segment spans residues 212-240 (ARACQHAQGIARLHKRQRPVHQGFGLKGA). The chain crosses the membrane as a helical span at residues 241–266 (VTLTILLGIFFLCWGPFFLHLTLIVL). Residues 267 to 279 (CPEHPTCGCIFKN) are Extracellular-facing. Residues 280 to 300 (FNLFLALIICNAIIDPLIYAF) form a helical membrane-spanning segment. Over 301 to 317 (HSQELRRTLKEVLTCSW) the chain is Cytoplasmic. A lipid anchor (S-palmitoyl cysteine) is attached at cysteine 315.

It belongs to the G-protein coupled receptor 1 family. In terms of assembly, interacts with MGRN1, but does not undergo MGRN1-mediated ubiquitination; this interaction competes with GNAS-binding and thus inhibits agonist-induced cAMP production. Interacts with OPN3; the interaction results in a decrease in MC1R-mediated cAMP signaling and ultimately a decrease in melanin production in melanocytes. As to expression, expressed in melanocytes. Expressed in corticoadrenal tissue.

It localises to the cell membrane. In terms of biological role, receptor for MSH (alpha, beta and gamma) and ACTH. The activity of this receptor is mediated by G proteins which activate adenylate cyclase. Mediates melanogenesis, the production of eumelanin (black/brown) and phaeomelanin (red/yellow), via regulation of cAMP signaling in melanocytes. The chain is Melanocyte-stimulating hormone receptor (MC1R) from Homo sapiens (Human).